The following is a 430-amino-acid chain: Glutamate-1-semialdehyde 2,1-aminomutase (430 aa).

Lysine 265 carries the post-translational modification N6-(pyridoxal phosphate)lysine.

Belongs to the class-III pyridoxal-phosphate-dependent aminotransferase family. HemL subfamily. In terms of assembly, homodimer. Requires pyridoxal 5'-phosphate as cofactor.

Its subcellular location is the cytoplasm. It carries out the reaction (S)-4-amino-5-oxopentanoate = 5-aminolevulinate. It functions in the pathway porphyrin-containing compound metabolism; protoporphyrin-IX biosynthesis; 5-aminolevulinate from L-glutamyl-tRNA(Glu): step 2/2. The protein is Glutamate-1-semialdehyde 2,1-aminomutase of Helicobacter pylori (strain HPAG1).